Here is a 270-residue protein sequence, read N- to C-terminus: Pyrroline-5-carboxylate reductase (270 aa).

This sequence belongs to the pyrroline-5-carboxylate reductase family.

It is found in the cytoplasm. It carries out the reaction L-proline + NADP(+) = (S)-1-pyrroline-5-carboxylate + NADPH + 2 H(+). It catalyses the reaction L-proline + NAD(+) = (S)-1-pyrroline-5-carboxylate + NADH + 2 H(+). Its pathway is amino-acid biosynthesis; L-proline biosynthesis; L-proline from L-glutamate 5-semialdehyde: step 1/1. Catalyzes the reduction of 1-pyrroline-5-carboxylate (PCA) to L-proline. This is Pyrroline-5-carboxylate reductase from Methanosarcina acetivorans (strain ATCC 35395 / DSM 2834 / JCM 12185 / C2A).